Here is a 1240-residue protein sequence, read N- to C-terminus: Serine/threonine-protein kinase TAO2 (1240 aa).

Ser-9 carries the phosphoserine modification. The Protein kinase domain maps to 28–281 (FSDLREIGHG…SEVLLKHRFV (254 aa)). Residues 34-42 (IGHGSFGAV) and Lys-57 contribute to the ATP site. Residue Asp-151 is the Proton acceptor of the active site. Ser-181 carries the phosphoserine modification. The interval 320–463 (APNGPGAEAP…PTSTSSSARR (144 aa)) is disordered. Positions 356 to 380 (SSHSVPSMSISASSQSSSVNSLADA) are enriched in low complexity. Acidic residues predominate over residues 381-401 (SDNEEEEEEEEEEEEEEEEEG). A compositionally biased stretch (basic and acidic residues) spans 402 to 417 (PESREMAMMQEGEHTV). Ser-422 is subject to Phosphoserine. Coiled-coil stretches lie at residues 493 to 528 (SALR…EEHS) and 581 to 608 (KELA…LQEN). Ser-663 carries the post-translational modification Phosphoserine. A coiled-coil region spans residues 688-720 (LRQHEATRELELRQLQAVQRTRAELTRLQHQTE). Residues Ser-782, Ser-830, and Ser-832 each carry the phosphoserine modification. Positions 805 to 934 (RILGKEGTTL…GDGCPSPDIP (130 aa)) form a coiled coil. Positions 899-946 (VLTPVPEEEEEEEEEGGAPIGTHRDPGDGCPSPDIPPEPPPSHLRQYP) are disordered. Residues 904 to 914 (PEEEEEEEEEG) are compositionally biased toward acidic residues. Over residues 931–940 (PDIPPEPPPS) the composition is skewed to pro residues. Transmembrane regions (helical) follow at residues 972–992 (LLPL…GGGL), 994–1014 (AALL…LFLC), 1019–1039 (LPPG…VLSL), 1045–1065 (LMGV…SLAL), and 1175–1195 (LASC…LLKG). The residue at position 999 (Leu-999) is an Omega-N-methylarginine. The residue at position 1037 (Leu-1037) is a Phosphoserine. The disordered stretch occupies residues 1212–1240 (LGLSASRQLPPGTVAGRRSQTRRTLPPWR).

The protein belongs to the protein kinase superfamily. STE Ser/Thr protein kinase family. STE20 subfamily. In terms of assembly, interacts with MAP2K3 and MAP2K6. Self-associates. Interacts with tubulins. Interacts with MAP3K7 and interferes with MAP3K7-binding to CHUK and thus prevents NF-kappa-B activation. Isoform 2 interacts with PCDH8; this complex may also include CDH2. Mg(2+) serves as cofactor. In terms of processing, autophosphorylated. Phosphorylated by ATM. Post-translationally, phosphorylated on Ser-1037 by MAPK14. This phosphorylation is required PCDH8 for endocytosis.

The protein resides in the cytoplasmic vesicle membrane. It is found in the cytoplasm. The protein localises to the cytoskeleton. It localises to the cell projection. Its subcellular location is the dendrite. The enzyme catalyses L-seryl-[protein] + ATP = O-phospho-L-seryl-[protein] + ADP + H(+). It carries out the reaction L-threonyl-[protein] + ATP = O-phospho-L-threonyl-[protein] + ADP + H(+). Its function is as follows. Serine/threonine-protein kinase involved in different processes such as membrane blebbing and apoptotic bodies formation DNA damage response and MAPK14/p38 MAPK stress-activated MAPK cascade. Phosphorylates itself, MBP, activated MAPK8, MAP2K3, MAP2K6 and tubulins. Activates the MAPK14/p38 MAPK signaling pathway through the specific activation and phosphorylation of the upstream MAP2K3 and MAP2K6 kinases. In response to DNA damage, involved in the G2/M transition DNA damage checkpoint by activating the p38/MAPK14 stress-activated MAPK cascade, probably by mediating phosphorylation of upstream MAP2K3 and MAP2K6 kinases. May affect microtubule organization and stability. May play a role in the osmotic stress-MAPK8 pathway. Prevents MAP3K7-mediated activation of CHUK, and thus NF-kappa-B activation. Isoform 2, but not isoform 1, is required for PCDH8 endocytosis. Following homophilic interactions between PCDH8 extracellular domains, isoform 2 phosphorylates and activates MAPK14/p38 MAPK which in turn phosphorylates isoform 2. This process leads to PCDH8 endocytosis and CDH2 cointernalization. Both isoforms are involved in MAPK14/p38 MAPK activation. This chain is Serine/threonine-protein kinase TAO2 (Taok2), found in Mus musculus (Mouse).